The following is a 677-amino-acid chain: Nucleolar protein 9 (677 aa).

A compositionally biased stretch (basic residues) spans 1–12 (MAKPRGRKLLKK). Residues 1-50 (MAKPRGRKLLKKQQKDQFEPSNDVEKFEDDRDHQENVYQGDAADSEKSSD) are disordered. The span at 13-35 (QQKDQFEPSNDVEKFEDDRDHQE) shows a compositional bias: basic and acidic residues. Pumilio repeat units follow at residues 94-129 (EAKG…SVFK), 130-165 (AFNG…ELLT), 193-228 (ELKP…SSTK), 287-331 (DISP…LVFN), 339-374 (KEEA…RLYH), 375-412 (LYMK…QILD), 516-553 (NLPE…RLLL), and 554-592 (NVLS…RIAQ). Residues 639–677 (PNAVKPQPKNQQFKNNGNDNKRSSDSNYSSSSNFKKQRR) are disordered. The segment covering 646 to 655 (PKNQQFKNNG) has biased composition (polar residues).

It belongs to the NOP9 family.

The protein resides in the nucleus. The protein localises to the nucleolus. Its function is as follows. RNA-binding nucleolar protein required for pre-rRNA processing. Involved in production of 18S rRNA and assembly of small ribosomal subunit. The protein is Nucleolar protein 9 (NOP9) of Vanderwaltozyma polyspora (strain ATCC 22028 / DSM 70294 / BCRC 21397 / CBS 2163 / NBRC 10782 / NRRL Y-8283 / UCD 57-17) (Kluyveromyces polysporus).